The primary structure comprises 413 residues: Mitochondrial inner membrane magnesium transporter MFM1 (413 aa).

Residues 1 to 35 (MRAFPRVLPFRHQRSYNNILLRTVRLFGSSLSSFD) constitute a mitochondrion transit peptide. N-linked (GlcNAc...) asparagine glycosylation occurs at Asn202. A helical membrane pass occupies residues 329 to 349 (LMLLGIRYAIGMLSLGGALFL). A YGMN motif is present at residues 353 to 356 (YGMN). The helical transmembrane segment at 367–387 (AYLTVTILGLISTVWLYAKGI) threads the bilayer.

It belongs to the CorA metal ion transporter (MIT) (TC 1.A.35) family. Forms homooligomers. Interacts with MRS2. N-glycosylated. Glycosylation is important for correct localization of the protein.

Its subcellular location is the mitochondrion inner membrane. Its function is as follows. Mitochondrial inner membrane magnesium transporter required for mitochondrial magnesium homeostasis. Modulates the conductance of the MRS2 channel. Involved in the splicing of mRNA group II introns in mitochondria by affecting mitochondrial magnesium concentrations, which are critical for group II intron splicing. The protein is Mitochondrial inner membrane magnesium transporter MFM1 (MFM1) of Saccharomyces cerevisiae (strain ATCC 204508 / S288c) (Baker's yeast).